The primary structure comprises 258 residues: Snake venom serine protease KN13 (258 aa).

A signal peptide spans 1 to 18 (MVLIRVLANLLILQLSYA). A propeptide spanning residues 19–24 (QRSSEL) is cleaved from the precursor. The region spanning 25 to 249 (VIGGDECNIN…HLDWIQNIIA (225 aa)) is the Peptidase S1 domain. 6 disulfide bridges follow: C31–C163, C50–C66, C98–C256, C142–C210, C174–C189, and C200–C225. H65 acts as the Charge relay system in catalysis. N-linked (GlcNAc...) asparagine glycosylation occurs at N103. Residue D110 is the Charge relay system of the active site. N-linked (GlcNAc...) asparagine glycans are attached at residues N121, N122, N154, and N170. S204 serves as the catalytic Charge relay system. N-linked (GlcNAc...) asparagine glycosylation occurs at N251.

The protein belongs to the peptidase S1 family. Snake venom subfamily. Monomer. Expressed by the venom gland.

The protein localises to the secreted. Functionally, snake venom serine protease that may act in the hemostasis system of the prey. This is Snake venom serine protease KN13 from Trimeresurus stejnegeri (Chinese green tree viper).